The chain runs to 2156 residues: MAM and LDL-receptor class A domain-containing protein 1 (2156 aa).

A signal peptide spans 1 to 31 (MLFFLDRMLAFPMNETFCCLWIACVFNSTLA). At 32-2076 (QQGTESFQCD…FTYAQNNTWT (2045 aa)) the chain is on the vesicular side. The 36-residue stretch at 33-68 (QGTESFQCDNGVSLPPDSICDFTDQCGDSSDERHCL) folds into the LDL-receptor class A 1 domain. Intrachain disulfides connect C40-C58 and C52-C67. MAM domains lie at 71–229 (ERCD…GCLP) and 268–427 (QACG…ACGQ). In terms of domain architecture, LDL-receptor class A 2 spans 433–471 (LCSADEFPCTSGQCIAKESVCDSRQDCSDESDEDPATCS). 3 disulfides stabilise this stretch: C434–C446, C441–C459, and C453–C470. 2 consecutive MAM domains span residues 474–637 (LTCD…ECEI) and 652–816 (SKCD…NCTL). N813 carries N-linked (GlcNAc...) asparagine glycosylation. Positions 822 to 860 (SCEGLDHFWCRHTRACIEKLRLCDLVDDCGDRTDEVNCA) constitute an LDL-receptor class A 3 domain. 3 disulfide bridges follow: C823-C837, C831-C850, and C844-C859. The MAM 5 domain occupies 863–1024 (LQCNFETGIC…DDLSFMDCTL (162 aa)). N-linked (GlcNAc...) asparagine glycosylation occurs at N1049. An LDL-receptor class A 4 domain is found at 1049 to 1086 (NCTDNEFICRSDGHCIEKMQKCDFKYDCPDKSDEASCV). 3 cysteine pairs are disulfide-bonded: C1050–C1063, C1057–C1076, and C1070–C1085. The 169-residue stretch at 1088 to 1256 (EVCSFEKRSL…DDISFQDCSP (169 aa)) folds into the MAM 6 domain. An N-linked (GlcNAc...) asparagine glycan is attached at N1199. Positions 1263-1301 (KCTDHEFMCANKHCIAKDKLCDFVNDCADNSDETTFICR) constitute an LDL-receptor class A 5 domain. 3 disulfides stabilise this stretch: C1264–C1276, C1271–C1289, and C1283–C1300. Positions 1305–1465 (GRCDFEFDLC…DIVLTENCLS (161 aa)) constitute an MAM 7 domain. A glycan (N-linked (GlcNAc...) asparagine) is linked at N1414. The 37-residue stretch at 1482 to 1518 (FCPLGYRECHNGKCYRLEQSCNFVDNCGDNTDENECG) folds into the LDL-receptor class A 6 domain. Disulfide bonds link C1483–C1495, C1490–C1508, and C1502–C1517. Residues 1519-1676 (SSCTFEKGWC…DDIEFKNCTT (158 aa)) form the MAM 8 domain. An LDL-receptor class A 7 domain is found at 1683 to 1720 (LCPEITDFLCRDKKCIASHLLCDYKPDCSDRSDEAHCA). Intrachain disulfides connect C1684–C1697, C1692–C1710, and C1704–C1719. Residues 1727 to 1892 (GSCNFETSSG…DISFTPECVT (166 aa)) enclose the MAM 9 domain. LDL-receptor class A domains lie at 1902–1939 (PCEA…MDCP), 1946–1982 (LCSN…LICS), and 1985–2023 (SCSN…SSCS). Disulfide bonds link C1903-C1916, C1910-C1929, C1923-C1938, C1947-C1959, C1954-C1972, C1966-C1981, C1986-C1999, C1993-C2012, C2006-C2022, C2025-C2036, C2030-C2045, and C2047-C2056. In terms of domain architecture, EGF-like spans 2024–2057 (ECPLNYCRNGGTCVVEKNGPMCRCRQGWKGNRCH). The chain crosses the membrane as a helical span at residues 2077–2097 (LLGIGLAFLMTHITVAVLCFL). At 2098–2156 (ANRKVPIRKTEGSGNCAFVNPVYGNWSNPEKTESSVYSFSNPLYGTTSGSLETLSHHLK) the chain is on the cytoplasmic side.

In terms of assembly, interacts with FGF19. Strongly expressed in the small intestine.

It localises to the cytoplasmic vesicle membrane. Functionally, enhances production and/or transport of FGF19 and thus has a role in regulation of bile acid synthesis. The chain is MAM and LDL-receptor class A domain-containing protein 1 from Homo sapiens (Human).